Reading from the N-terminus, the 2167-residue chain is Glutamate synthase 1 [NADH], chloroplastic (2167 aa).

The interval 1-31 (MSAAQGMAYKLRTDAAPTGAGRRARRSHSSV) is disordered. The transit peptide at 1–36 (MSAAQGMAYKLRTDAAPTGAGRRARRSHSSVAAPYR) directs the protein to the chloroplast. The active-site Nucleophile is Cys100. The region spanning 100 to 504 (CGVGFVAELS…PGMMLLVDFE (405 aa)) is the Glutamine amidotransferase type-2 domain. The segment at 1022 to 1042 (KSNTGEGGEQPSRMEPLANGS) is disordered. Residue 1192-1249 (LAETHQTLVANGLRGRAILQTDGQLKTGKDVAVACLLGAEEFGFSTAPLITLGCIMMR) coordinates FMN. Positions 1245, 1251, and 1256 each coordinate [3Fe-4S] cluster. 1956 to 1970 (GGGDTGTDCIGTSIR) lines the NAD(+) pocket.

This sequence belongs to the glutamate synthase family. In terms of assembly, monomer. Requires [3Fe-4S] cluster as cofactor. The cofactor is FAD. It depends on FMN as a cofactor. In terms of tissue distribution, highly expressed in roots.

Its subcellular location is the plastid. The protein resides in the chloroplast. It carries out the reaction 2 L-glutamate + NAD(+) = L-glutamine + 2-oxoglutarate + NADH + H(+). It participates in amino-acid biosynthesis; L-glutamate biosynthesis via GLT pathway; L-glutamate from 2-oxoglutarate and L-glutamine (NAD(+) route): step 1/1. It functions in the pathway energy metabolism; nitrogen metabolism. In terms of biological role, involved in glutamate biosynthesis and plays a major role in the primary ammonium ions assimilation in seedling roots. May be involved in the reutilization of glutamine in developing organs. Plays a role in the development of tillers. The protein is Glutamate synthase 1 [NADH], chloroplastic of Oryza sativa subsp. japonica (Rice).